Reading from the N-terminus, the 48-residue chain is Osteocalcin (48 aa).

The 44-residue stretch at 1 to 44 (AGTAPADLTVAQLESLKEVCEANLACEHMMDVSGIIAAYTAYYG) folds into the Gla domain. Ca(2+) contacts are provided by Glu-14, Glu-18, Glu-21, and Glu-27. A 4-carboxyglutamate mark is found at Glu-14, Glu-18, and Glu-21. Cys-20 and Cys-26 are disulfide-bonded.

This sequence belongs to the osteocalcin/matrix Gla protein family. In terms of processing, gamma-carboxyglutamate residues are formed by vitamin K dependent carboxylation by GGCX. These residues are essential for the binding of calcium.

The protein localises to the secreted. Its subcellular location is the extracellular space. It localises to the extracellular matrix. The carboxylated form is one of the main organic components of the bone matrix, which constitutes 1-2% of the total bone protein. The carboxylated form binds strongly to apatite and calcium. The protein is Osteocalcin (bglap) of Cyprinus carpio (Common carp).